An 83-amino-acid chain; its full sequence is Cytochrome b559 subunit alpha (83 aa).

The chain crosses the membrane as a helical span at residues Val-21–Trp-35. His-23 contributes to the heme binding site.

It belongs to the PsbE/PsbF family. In terms of assembly, heterodimer of an alpha subunit and a beta subunit. PSII is composed of 1 copy each of membrane proteins PsbA, PsbB, PsbC, PsbD, PsbE, PsbF, PsbH, PsbI, PsbJ, PsbK, PsbL, PsbM, PsbT, PsbX, PsbY, PsbZ, Psb30/Ycf12, at least 3 peripheral proteins of the oxygen-evolving complex and a large number of cofactors. It forms dimeric complexes. Heme b serves as cofactor.

It is found in the plastid. It localises to the chloroplast thylakoid membrane. Its function is as follows. This b-type cytochrome is tightly associated with the reaction center of photosystem II (PSII). PSII is a light-driven water:plastoquinone oxidoreductase that uses light energy to abstract electrons from H(2)O, generating O(2) and a proton gradient subsequently used for ATP formation. It consists of a core antenna complex that captures photons, and an electron transfer chain that converts photonic excitation into a charge separation. The protein is Cytochrome b559 subunit alpha of Amborella trichopoda.